Here is a 413-residue protein sequence, read N- to C-terminus: Glucose-1-phosphate adenylyltransferase (413 aa).

Alpha-D-glucose 1-phosphate is bound by residues glycine 163, 179–180 (EK), and serine 197.

It belongs to the bacterial/plant glucose-1-phosphate adenylyltransferase family. In terms of assembly, homotetramer.

It carries out the reaction alpha-D-glucose 1-phosphate + ATP + H(+) = ADP-alpha-D-glucose + diphosphate. Its pathway is glycan biosynthesis; glycogen biosynthesis. Involved in the biosynthesis of ADP-glucose, a building block required for the elongation reactions to produce glycogen. Catalyzes the reaction between ATP and alpha-D-glucose 1-phosphate (G1P) to produce pyrophosphate and ADP-Glc. The protein is Glucose-1-phosphate adenylyltransferase of Parafrankia sp. (strain EAN1pec).